We begin with the raw amino-acid sequence, 261 residues long: Thiazole synthase (261 aa).

The Schiff-base intermediate with DXP role is filled by lysine 102. Residues glycine 163, alanine 189–glycine 190, and asparagine 211–threonine 212 contribute to the 1-deoxy-D-xylulose 5-phosphate site.

This sequence belongs to the ThiG family. Homotetramer. Forms heterodimers with either ThiH or ThiS.

Its subcellular location is the cytoplasm. It catalyses the reaction [ThiS sulfur-carrier protein]-C-terminal-Gly-aminoethanethioate + 2-iminoacetate + 1-deoxy-D-xylulose 5-phosphate = [ThiS sulfur-carrier protein]-C-terminal Gly-Gly + 2-[(2R,5Z)-2-carboxy-4-methylthiazol-5(2H)-ylidene]ethyl phosphate + 2 H2O + H(+). It participates in cofactor biosynthesis; thiamine diphosphate biosynthesis. In terms of biological role, catalyzes the rearrangement of 1-deoxy-D-xylulose 5-phosphate (DXP) to produce the thiazole phosphate moiety of thiamine. Sulfur is provided by the thiocarboxylate moiety of the carrier protein ThiS. In vitro, sulfur can be provided by H(2)S. In Myxococcus xanthus (strain DK1622), this protein is Thiazole synthase.